The following is a 204-amino-acid chain: FMN-dependent NADH:quinone oxidoreductase (204 aa).

FMN contacts are provided by residues Ser-10 and 16-18; that span reads SKS.

This sequence belongs to the azoreductase type 1 family. As to quaternary structure, homodimer. Requires FMN as cofactor.

The enzyme catalyses 2 a quinone + NADH + H(+) = 2 a 1,4-benzosemiquinone + NAD(+). It catalyses the reaction N,N-dimethyl-1,4-phenylenediamine + anthranilate + 2 NAD(+) = 2-(4-dimethylaminophenyl)diazenylbenzoate + 2 NADH + 2 H(+). Functionally, quinone reductase that provides resistance to thiol-specific stress caused by electrophilic quinones. Also exhibits azoreductase activity. Catalyzes the reductive cleavage of the azo bond in aromatic azo compounds to the corresponding amines. The chain is FMN-dependent NADH:quinone oxidoreductase from Ruegeria pomeroyi (strain ATCC 700808 / DSM 15171 / DSS-3) (Silicibacter pomeroyi).